Reading from the N-terminus, the 534-residue chain is O-phosphoserine--tRNA(Cys) ligase (534 aa).

Substrate is bound by residues histidine 186–threonine 188, serine 231–serine 233, tyrosine 273–tyrosine 274, and asparagine 325.

The protein belongs to the class-II aminoacyl-tRNA synthetase family. O-phosphoseryl-tRNA(Cys) synthetase subfamily. In terms of assembly, homotetramer. Interacts with SepCysS.

The catalysed reaction is tRNA(Cys) + O-phospho-L-serine + ATP = O-phospho-L-seryl-tRNA(Cys) + AMP + diphosphate. Its function is as follows. Catalyzes the attachment of O-phosphoserine (Sep) to tRNA(Cys). The polypeptide is O-phosphoserine--tRNA(Cys) ligase (sepS) (Archaeoglobus fulgidus (strain ATCC 49558 / DSM 4304 / JCM 9628 / NBRC 100126 / VC-16)).